Here is a 217-residue protein sequence, read N- to C-terminus: MELVLGPLEARVIGCLIEKEICTPDQYPLSLNALVNACNQKSNREPVLELSELDIRAVVDELIRKRLVVNTAGFNARVPRYQHRFCNTEFGELKFTAQELGIICELLLRGPQTPGELRSRTNRLCSFDDVTQVDAVLAKLAEQGPYVVKLPREPGKRESRYAHLFSGEVDLQALAEAAPASSYASPAADRLTALEEEVESLKAQLQLLAERLAQLEG.

This sequence belongs to the UPF0502 family.

In Aeromonas hydrophila subsp. hydrophila (strain ATCC 7966 / DSM 30187 / BCRC 13018 / CCUG 14551 / JCM 1027 / KCTC 2358 / NCIMB 9240 / NCTC 8049), this protein is UPF0502 protein AHA_2872.